An 82-amino-acid polypeptide reads, in one-letter code: ATP synthase subunit c (82 aa).

Helical transmembrane passes span 5–25 and 57–77; these read IASA…IGPG and LAFM…LLFA.

This sequence belongs to the ATPase C chain family. In terms of assembly, F-type ATPases have 2 components, F(1) - the catalytic core - and F(0) - the membrane proton channel. F(1) has five subunits: alpha(3), beta(3), gamma(1), delta(1), epsilon(1). F(0) has four main subunits: a(1), b(1), b'(1) and c(10-14). The alpha and beta chains form an alternating ring which encloses part of the gamma chain. F(1) is attached to F(0) by a central stalk formed by the gamma and epsilon chains, while a peripheral stalk is formed by the delta, b and b' chains.

The protein resides in the cellular thylakoid membrane. In terms of biological role, f(1)F(0) ATP synthase produces ATP from ADP in the presence of a proton or sodium gradient. F-type ATPases consist of two structural domains, F(1) containing the extramembraneous catalytic core and F(0) containing the membrane proton channel, linked together by a central stalk and a peripheral stalk. During catalysis, ATP synthesis in the catalytic domain of F(1) is coupled via a rotary mechanism of the central stalk subunits to proton translocation. Key component of the F(0) channel; it plays a direct role in translocation across the membrane. A homomeric c-ring of between 10-14 subunits forms the central stalk rotor element with the F(1) delta and epsilon subunits. This is ATP synthase subunit c from Cyanothece sp. (strain PCC 7425 / ATCC 29141).